Consider the following 67-residue polypeptide: Large ribosomal subunit protein uL29 (67 aa).

The protein belongs to the universal ribosomal protein uL29 family.

The chain is Large ribosomal subunit protein uL29 from Zymomonas mobilis subsp. mobilis (strain ATCC 31821 / ZM4 / CP4).